Consider the following 146-residue polypeptide: Large ribosomal subunit protein bL19 (146 aa).

This sequence belongs to the bacterial ribosomal protein bL19 family.

Functionally, this protein is located at the 30S-50S ribosomal subunit interface and may play a role in the structure and function of the aminoacyl-tRNA binding site. This Bartonella henselae (strain ATCC 49882 / DSM 28221 / CCUG 30454 / Houston 1) (Rochalimaea henselae) protein is Large ribosomal subunit protein bL19.